The primary structure comprises 134 residues: Small ribosomal subunit protein uS8 (134 aa).

Belongs to the universal ribosomal protein uS8 family. In terms of assembly, part of the 30S ribosomal subunit. Contacts proteins S5 and S12.

Functionally, one of the primary rRNA binding proteins, it binds directly to 16S rRNA central domain where it helps coordinate assembly of the platform of the 30S subunit. In Thermotoga maritima (strain ATCC 43589 / DSM 3109 / JCM 10099 / NBRC 100826 / MSB8), this protein is Small ribosomal subunit protein uS8.